Here is a 92-residue protein sequence, read N- to C-terminus: MARSLKKNPFVGNHLLKKINKLNTKGEKEIIVTWSRASTIIPTMIGHTIAVHNGKDHLPVYITDRMVGHKLGEFAPTRNFRGHVKNDNRSRR.

The protein belongs to the universal ribosomal protein uS19 family.

It is found in the plastid. Its subcellular location is the chloroplast. Its function is as follows. Protein S19 forms a complex with S13 that binds strongly to the 16S ribosomal RNA. This chain is Small ribosomal subunit protein uS19c, found in Cucumis sativus (Cucumber).